A 544-amino-acid chain; its full sequence is Secreted aspartic protease 9 (544 aa).

A signal peptide spans Met1–Ala17. A disordered region spans residues Gly31 to Arg50. The region spanning Tyr65–Ala479 is the Peptidase A1 domain. Asp83 is an active-site residue. Residue Asp83 to Gly85 participates in pepstatin A binding. The cysteines at positions 98 and 195 are disulfide-linked. N-linked (GlcNAc...) asparagine glycosylation is found at Asn212, Asn240, and Asn252. The active site involves Asp371. Asp371–Thr375 contributes to the pepstatin A binding site. A disulfide bridge links Cys406 with Cys441. 2 N-linked (GlcNAc...) asparagine glycosylation sites follow: Asn422 and Asn499. A disordered region spans residues Ser500–His519. Residue Ser520 is the site of GPI-anchor amidated serine attachment. A propeptide spans Ala521 to Val544 (removed in mature form). Residues Ile524 to Val544 form a helical membrane-spanning segment.

Belongs to the peptidase A1 family. As to quaternary structure, monomer. In terms of processing, the GPI-anchor is attached to the protein in the endoplasmic reticulum and serves to target the protein to the cell surface. There, the glucosamine-inositol phospholipid moiety is cleaved off and the GPI-modified mannoprotein is covalently attached via its lipidless GPI glycan remnant to the 1,6-beta-glucan of the outer cell wall layer.

It localises to the cell membrane. Its subcellular location is the secreted. It is found in the cell wall. It catalyses the reaction Preferential cleavage at the carboxyl of hydrophobic amino acids, but fails to cleave 15-Leu-|-Tyr-16, 16-Tyr-|-Leu-17 and 24-Phe-|-Phe-25 of insulin B chain. Activates trypsinogen, and degrades keratin.. Secreted aspartic peptidases (SAPs) are a group of ten acidic hydrolases considered as key virulence factors. These enzymes supply the fungus with nutrient amino acids as well as are able to degrade the selected host's proteins involved in the immune defense. Moreover, acts toward human hemoglobin though limited proteolysis to generate a variety of antimicrobial hemocidins, enabling to compete with the other microorganisms of the same physiological niche using the microbicidal peptides generated from the host protein. In terms of biological role, plays a key role in defense against host by cleaving histatin-5 (Hst 5), a peptide from human saliva that carries out fungicidal activity. The cleavage rate decreases in an order of SAP2 &gt; SAP9 &gt; SAP3 &gt; SAP7 &gt; SAP4 &gt; SAP1 &gt; SAP8. The first cleavage occurs between residues 'Lys-17' and 'His-18' of Hst 5, giving DSHAKRHHGYKRKFHEK and HHSHRGY peptides. Simultaneously, the DSHAKRHHGYKRK peptide is also formed. Further fragmentation by SAP9 results in FHEK product. The polypeptide is Secreted aspartic protease 9 (Candida albicans (strain SC5314 / ATCC MYA-2876) (Yeast)).